Reading from the N-terminus, the 828-residue chain is Fibroblast growth factor receptor 4 (828 aa).

The first 31 residues, 1–31, serve as a signal peptide directing secretion; that stretch reads MSGSIRRSYTAMQNFPRFLLGVLFVATLSSC. Over 32–392 the chain is Extracellular; the sequence is RPRLSEDEAN…AEPAESRYMD (361 aa). Residues 33–127 enclose the Ig-like C2-type 1 domain; that stretch reads PRLSEDEANW…GKILRRFSIS (95 aa). A disulfide bridge links Cys-67 with Cys-112. N-linked (GlcNAc...) asparagine glycosylation is present at Asn-70. The tract at residues 132 to 156 is disordered; that stretch reads LASGDEEEEEEDDDDEDGRREDTTA. Acidic residues predominate over residues 135–147; that stretch reads GDEEEEEEDDDDE. 2 consecutive Ig-like C2-type domains span residues 169–259 and 272–372; these read PYWT…LTYT and PILQ…AWLT. Cys-194 and Cys-247 are joined by a disulfide. N-linked (GlcNAc...) asparagine glycans are attached at residues Asn-244, Asn-281, Asn-313, and Asn-345. Residues Cys-294 and Cys-356 are joined by a disulfide bond. Residues 393 to 413 traverse the membrane as a helical segment; the sequence is IIIYTSGFLAVAMAIMIVILC. The Cytoplasmic segment spans residues 414–828; the sequence is RMQTPHSKQT…YHNIHSQLGT (415 aa). Residues 490-777 enclose the Protein kinase domain; sequence LVLGKPLGEG…ILTAVSEEYL (288 aa). Residues 496–504 and Lys-526 contribute to the ATP site; that span reads LGEGCFGQV. Catalysis depends on Asp-635, which acts as the Proton acceptor. Residues Tyr-665, Tyr-666, and Tyr-776 each carry the phosphotyrosine; by autocatalysis modification.

The protein belongs to the protein kinase superfamily. Tyr protein kinase family. Fibroblast growth factor receptor subfamily. Post-translationally, ubiquitinated. Subject to proteasomal degradation when not fully glycosylated. Autophosphorylated. Binding of FGF family members together with heparan sulfate proteoglycan or heparin promotes receptor dimerization and autophosphorylation on tyrosine residues. Autophosphorylation occurs in trans between the two FGFR molecules present in the dimer.

It is found in the cell membrane. The protein resides in the endosome. Its subcellular location is the endoplasmic reticulum. It catalyses the reaction L-tyrosyl-[protein] + ATP = O-phospho-L-tyrosyl-[protein] + ADP + H(+). Its activity is regulated as follows. Present in an inactive conformation in the absence of bound ligand. Ligand binding leads to dimerization and activation by autophosphorylation on tyrosine residues. Functionally, tyrosine-protein kinase that acts as a cell-surface receptor for fibroblast growth factors and plays a role in the regulation of cell proliferation, differentiation and migration, and in regulation of lipid metabolism, bile acid biosynthesis, glucose uptake, vitamin D metabolism and phosphate homeostasis. Required for normal down-regulation of the expression of CYP7A1, the rate-limiting enzyme in bile acid synthesis, in response to FGF19. Phosphorylates PLCG1 and FRS2. Ligand binding leads to the activation of several signaling cascades. Activation of PLCG1 leads to the production of the cellular signaling molecules diacylglycerol and inositol 1,4,5-trisphosphate. Phosphorylation of FRS2 triggers recruitment of GRB2, GAB1, PIK3R1 and SOS1, and mediates activation of RAS, MAPK1/ERK2, MAPK3/ERK1 and the MAP kinase signaling pathway, as well as of the AKT1 signaling pathway. The polypeptide is Fibroblast growth factor receptor 4 (fgfr4) (Xenopus laevis (African clawed frog)).